The following is a 270-amino-acid chain: Regulatory protein RecX (270 aa).

The protein belongs to the RecX family.

Its subcellular location is the cytoplasm. Its function is as follows. Modulates RecA activity. The protein is Regulatory protein RecX of Bacillus anthracis (strain A0248).